A 232-amino-acid polypeptide reads, in one-letter code: Putative N-acetylmannosamine-6-phosphate 2-epimerase (232 aa).

This sequence belongs to the NanE family.

The catalysed reaction is an N-acyl-D-glucosamine 6-phosphate = an N-acyl-D-mannosamine 6-phosphate. The protein operates within amino-sugar metabolism; N-acetylneuraminate degradation; D-fructose 6-phosphate from N-acetylneuraminate: step 3/5. Converts N-acetylmannosamine-6-phosphate (ManNAc-6-P) to N-acetylglucosamine-6-phosphate (GlcNAc-6-P). The polypeptide is Putative N-acetylmannosamine-6-phosphate 2-epimerase (Borrelia garinii subsp. bavariensis (strain ATCC BAA-2496 / DSM 23469 / PBi) (Borreliella bavariensis)).